A 454-amino-acid chain; its full sequence is Probable N-octanoylanthranilate hydrolase AqdA2 (454 aa).

Residue serine 185 is the Acyl-ester intermediate of the active site. Residues glutamate 306 and histidine 379 each act as charge relay system in the active site.

This sequence belongs to the type-B carboxylesterase/lipase family.

The enzyme catalyses N-octanoylanthranilate + H2O = anthranilate + octanoate + H(+). Functionally, involved in the degradation of the Pseudomonas aeruginosa quorum sensing signal molecules HHQ (2-heptyl-4-quinolone) and PQS (2-heptyl-3-hydroxy-4-quinolone) to anthranilic acid. Probably catalyzes the hydrolysis of N-octanoylanthranilic acid to anthranilic acid. This chain is Probable N-octanoylanthranilate hydrolase AqdA2, found in Rhodococcus erythropolis (Arthrobacter picolinophilus).